The primary structure comprises 143 residues: Peptide methionine sulfoxide reductase MsrB (143 aa).

Residues 16–139 (DAELRRRLTP…NSAALNFESR (124 aa)) enclose the MsrB domain. C55, C58, C104, and C107 together coordinate Zn(2+). The active-site Nucleophile is C128.

The protein belongs to the MsrB Met sulfoxide reductase family. It depends on Zn(2+) as a cofactor.

The enzyme catalyses L-methionyl-[protein] + [thioredoxin]-disulfide + H2O = L-methionyl-(R)-S-oxide-[protein] + [thioredoxin]-dithiol. This is Peptide methionine sulfoxide reductase MsrB from Burkholderia orbicola (strain MC0-3).